We begin with the raw amino-acid sequence, 159 residues long: SsrA-binding protein (159 aa).

The interval 137-159 is disordered; that stretch reads DKRETEKQRDWSREKGRLLKERG.

It belongs to the SmpB family.

The protein resides in the cytoplasm. Required for rescue of stalled ribosomes mediated by trans-translation. Binds to transfer-messenger RNA (tmRNA), required for stable association of tmRNA with ribosomes. tmRNA and SmpB together mimic tRNA shape, replacing the anticodon stem-loop with SmpB. tmRNA is encoded by the ssrA gene; the 2 termini fold to resemble tRNA(Ala) and it encodes a 'tag peptide', a short internal open reading frame. During trans-translation Ala-aminoacylated tmRNA acts like a tRNA, entering the A-site of stalled ribosomes, displacing the stalled mRNA. The ribosome then switches to translate the ORF on the tmRNA; the nascent peptide is terminated with the 'tag peptide' encoded by the tmRNA and targeted for degradation. The ribosome is freed to recommence translation, which seems to be the essential function of trans-translation. The polypeptide is SsrA-binding protein (Mesorhizobium japonicum (strain LMG 29417 / CECT 9101 / MAFF 303099) (Mesorhizobium loti (strain MAFF 303099))).